A 172-amino-acid polypeptide reads, in one-letter code: Cytidylate kinase (172 aa).

ATP is bound at residue 4–12 (GPPGSGKST).

The protein belongs to the cytidylate kinase family. Type 2 subfamily.

It is found in the cytoplasm. The catalysed reaction is CMP + ATP = CDP + ADP. The enzyme catalyses dCMP + ATP = dCDP + ADP. This chain is Cytidylate kinase (cmk), found in Aeropyrum pernix (strain ATCC 700893 / DSM 11879 / JCM 9820 / NBRC 100138 / K1).